Here is a 297-residue protein sequence, read N- to C-terminus: Protein phosphatase PTC7 homolog (297 aa).

The transit peptide at 1–27 (MFSVLSCGRLVARAVFGGLSQTDSRDY) directs the protein to the mitochondrion. Residues 28-292 (SLVTASCGFG…DDITVLLSIV (265 aa)) enclose the PPM-type phosphatase domain. The Mn(2+) site is built by D71, G72, and D216.

The protein belongs to the PP2C family. Requires Mg(2+) as cofactor. Mn(2+) serves as cofactor.

It localises to the mitochondrion matrix. The enzyme catalyses O-phospho-L-seryl-[protein] + H2O = L-seryl-[protein] + phosphate. It catalyses the reaction O-phospho-L-threonyl-[protein] + H2O = L-threonyl-[protein] + phosphate. Its function is as follows. Protein phosphatase which positively regulates biosynthesis of the ubiquinone, coenzyme Q. Dephosphorylates the ubiquinone biosynthesis protein coq7 which is likely to lead to its activation. This is Protein phosphatase PTC7 homolog (pptc7) from Xenopus laevis (African clawed frog).